The primary structure comprises 368 residues: 3-isopropylmalate dehydrogenase (368 aa).

NAD(+) is bound at residue 77 to 88; that stretch reads GPKWGTGAVRPE. 4 residues coordinate substrate: arginine 95, arginine 105, arginine 134, and aspartate 226. Aspartate 226, aspartate 251, and aspartate 255 together coordinate Mg(2+). 290 to 301 is an NAD(+) binding site; that stretch reads GSAPDLPANKVN.

This sequence belongs to the isocitrate and isopropylmalate dehydrogenases family. As to quaternary structure, homodimer. The cofactor is Mg(2+). Requires Mn(2+) as cofactor.

The protein resides in the cytoplasm. The enzyme catalyses (2R,3S)-3-isopropylmalate + NAD(+) = 4-methyl-2-oxopentanoate + CO2 + NADH. Its pathway is amino-acid biosynthesis; L-leucine biosynthesis; L-leucine from 3-methyl-2-oxobutanoate: step 3/4. In terms of biological role, catalyzes the oxidation of 3-carboxy-2-hydroxy-4-methylpentanoate (3-isopropylmalate) to 3-carboxy-4-methyl-2-oxopentanoate. The product decarboxylates to 4-methyl-2 oxopentanoate. The sequence is that of 3-isopropylmalate dehydrogenase (LEU2) from Kodamaea ohmeri (Yeast).